Here is a 337-residue protein sequence, read N- to C-terminus: CMRF35-like molecule 1 (337 aa).

The signal sequence occupies residues 1 to 19 (MHLSLLVPFLFWITGCCTA). Residues 20–125 (EDPVTGPEEV…LDPMFKVTVN (106 aa)) form the Ig-like V-type domain. The Extracellular portion of the chain corresponds to 20-193 (EDPVTGPEEV…GVGDGFLDLS (174 aa)). A plays an important role in murine norovirus (MNV) binding region spans residues 39-45 (VQCRYTS). 2 disulfides stabilise this stretch: Cys-41-Cys-109 and Cys-55-Cys-63. Residues 194–214 (VLLPVISAVLLLLLLVASLFA) traverse the membrane as a helical segment. Residues 215–337 (WRMVRRQKKA…IRRPLPAAMP (123 aa)) lie on the Cytoplasmic side of the membrane. Disordered regions lie at residues 248-270 (QPRTSPGSSWKKGSSMSSSGKDH) and 318-337 (LEEETTEYSSIRRPLPAAMP). Residues 252–266 (SPGSSWKKGSSMSSS) show a composition bias toward low complexity.

This sequence belongs to the CD300 family. As to quaternary structure, interacts with PTPN6/SHP-1 in a tyrosine phosphorylation dependent manner. Interacts with IL4R. Post-translationally, phosphorylated on tyrosine. In terms of tissue distribution, expressed in myeloid cells. Present on the surface of macrophages (at protein level). Highly expressed by alveolar, splenic macrophages and bone marrow-derived dendritic cells. Expression is increased following aeroallergen challenge in macrophages, mast cells, and eosinophils.

The protein localises to the cell membrane. Acts as an inhibitory receptor for myeloid cells and mast cells. Positively regulates the phagocytosis of apoptotic cells (efferocytosis) via phosphatidylserine (PS) recognition; recognizes and binds PS as a ligand which is expressed on the surface of apoptotic cells. Plays an important role in the maintenance of immune homeostasis, by promoting macrophage-mediated efferocytosis and by inhibiting dendritic cell-mediated efferocytosis. Negatively regulates Fc epsilon receptor-dependent mast cell activation and allergic responses via binding to ceramide which acts as a ligand. May act as a coreceptor for interleukin 4 (IL-4). Associates with and regulates IL-4 receptor alpha-mediated responses by augmenting IL-4- and IL-13-induced signaling. Negatively regulates the Toll-like receptor (TLR) signaling mediated by MYD88 and TRIF through activation of PTPN6/SHP-1 and PTPN11/SHP-2. Inhibits osteoclast formation. Induces macrophage cell death upon engagement. Functionally, (Microbial infection) Acts as a functional receptor for murine norovirus (MNV). Mediates binding to the cell surface and is both necessary and sufficient for viral entry and replication. This interaction requires Mg(2+) and Ca(2+) and is enhanced by bile acids. Primary determinant of MNV species tropism and is sufficient to render cells permissive to infection by MNV. Can render nonmurine mammalian cells susceptible to MNV infection. This is CMRF35-like molecule 1 (Cd300lf) from Mus musculus (Mouse).